Here is a 199-residue protein sequence, read N- to C-terminus: Imidazoleglycerol-phosphate dehydratase (199 aa).

It belongs to the imidazoleglycerol-phosphate dehydratase family.

The protein localises to the cytoplasm. The catalysed reaction is D-erythro-1-(imidazol-4-yl)glycerol 3-phosphate = 3-(imidazol-4-yl)-2-oxopropyl phosphate + H2O. It functions in the pathway amino-acid biosynthesis; L-histidine biosynthesis; L-histidine from 5-phospho-alpha-D-ribose 1-diphosphate: step 6/9. The sequence is that of Imidazoleglycerol-phosphate dehydratase from Acidithiobacillus ferrooxidans (strain ATCC 53993 / BNL-5-31) (Leptospirillum ferrooxidans (ATCC 53993)).